The following is a 226-amino-acid chain: Phosphoribosylformylglycinamidine synthase subunit PurQ (226 aa).

The 223-residue stretch at 3–225 (FAVIVFPGSN…VKWGARHVTY (223 aa)) folds into the Glutamine amidotransferase type-1 domain. Cys-86 functions as the Nucleophile in the catalytic mechanism. Catalysis depends on residues His-194 and Glu-196.

Part of the FGAM synthase complex composed of 1 PurL, 1 PurQ and 2 PurS subunits.

The protein resides in the cytoplasm. It carries out the reaction N(2)-formyl-N(1)-(5-phospho-beta-D-ribosyl)glycinamide + L-glutamine + ATP + H2O = 2-formamido-N(1)-(5-O-phospho-beta-D-ribosyl)acetamidine + L-glutamate + ADP + phosphate + H(+). The catalysed reaction is L-glutamine + H2O = L-glutamate + NH4(+). It functions in the pathway purine metabolism; IMP biosynthesis via de novo pathway; 5-amino-1-(5-phospho-D-ribosyl)imidazole from N(2)-formyl-N(1)-(5-phospho-D-ribosyl)glycinamide: step 1/2. Its function is as follows. Part of the phosphoribosylformylglycinamidine synthase complex involved in the purines biosynthetic pathway. Catalyzes the ATP-dependent conversion of formylglycinamide ribonucleotide (FGAR) and glutamine to yield formylglycinamidine ribonucleotide (FGAM) and glutamate. The FGAM synthase complex is composed of three subunits. PurQ produces an ammonia molecule by converting glutamine to glutamate. PurL transfers the ammonia molecule to FGAR to form FGAM in an ATP-dependent manner. PurS interacts with PurQ and PurL and is thought to assist in the transfer of the ammonia molecule from PurQ to PurL. The sequence is that of Phosphoribosylformylglycinamidine synthase subunit PurQ from Exiguobacterium sp. (strain ATCC BAA-1283 / AT1b).